The chain runs to 427 residues: Diaminobutyrate--2-oxoglutarate transaminase (427 aa).

Lysine 269 is subject to N6-(pyridoxal phosphate)lysine.

Belongs to the class-III pyridoxal-phosphate-dependent aminotransferase family. The cofactor is pyridoxal 5'-phosphate.

The enzyme catalyses L-2,4-diaminobutanoate + 2-oxoglutarate = L-aspartate 4-semialdehyde + L-glutamate. Its pathway is amine and polyamine biosynthesis; ectoine biosynthesis; L-ectoine from L-aspartate 4-semialdehyde: step 1/3. Its function is as follows. Catalyzes reversively the conversion of L-aspartate beta-semialdehyde (ASA) to L-2,4-diaminobutyrate (DABA) by transamination with L-glutamate. This is Diaminobutyrate--2-oxoglutarate transaminase (ectB) from Halalkalibacterium halodurans (strain ATCC BAA-125 / DSM 18197 / FERM 7344 / JCM 9153 / C-125) (Bacillus halodurans).